The primary structure comprises 1587 residues: Sister chromatid cohesion protein mis4 (1587 aa).

The disordered stretch occupies residues 140-172 (PKEKPDASSINTNRSSSDNGFLTPSSSPRSPSC). Over residues 147 to 162 (SSINTNRSSSDNGFLT) the composition is skewed to polar residues. The segment covering 163–172 (PSSSPRSPSC) has biased composition (low complexity). Serine 183 is modified (phosphoserine). HEAT repeat units lie at residues 775-812 (LNLKFFVSLIIGFLDSPQASLRTKCLRIINQMKTIPSI), 814-851 (RTHPEVLAQIISKSNDQSAIVRDTVLDLLGTYIMAYRE), 853-888 (IPQIYGCIISGISDPSTIVRKRAIKQLCEVYEATED), 890-927 (NIRVDIASKLLTRSNDEEETISELSLEVLEKLWFSPAS), 1101-1140 (ATLMEIVPCLCSLFTRLNDYERLKKIVVSCLKSLEEARHS), and 1183-1220 (DAYVILLGYFQKLLKDAKGQLRIHIIDNMSRICLRETS).

Belongs to the SCC2/Nipped-B family. Interacts with ssl3.

The protein localises to the nucleus. It localises to the chromosome. In terms of biological role, plays a structural role in chromatin. Chromatid cohesion molecule required for equal sister chromatid separation in anaphase. May form a stable link between chromatids in S phase that is split rather than removed in anaphase. Also required for spindle-kinetochore interaction in early mitosis and inhibit sister chromatid separation until the cleavage of Rad21 in anaphase. This Schizosaccharomyces pombe (strain 972 / ATCC 24843) (Fission yeast) protein is Sister chromatid cohesion protein mis4 (mis4).